A 253-amino-acid polypeptide reads, in one-letter code: Small ribosomal subunit protein uS3 (253 aa).

Residues 39 to 107 enclose the KH type-2 domain; it reads VRRALKKRLY…EVHLNIVEIR (69 aa). The disordered stretch occupies residues 215–253; that stretch reads LDKRLAGESGPAGEGGGRERGDRPDRGPRRERRGEPSNA. Residues 230-253 show a composition bias toward basic and acidic residues; sequence GGRERGDRPDRGPRRERRGEPSNA.

The protein belongs to the universal ribosomal protein uS3 family. As to quaternary structure, part of the 30S ribosomal subunit. Forms a tight complex with proteins S10 and S14.

Its function is as follows. Binds the lower part of the 30S subunit head. Binds mRNA in the 70S ribosome, positioning it for translation. The chain is Small ribosomal subunit protein uS3 from Phenylobacterium zucineum (strain HLK1).